The following is a 607-amino-acid chain: Aspartate--tRNA(Asp/Asn) ligase (607 aa).

Glutamate 168 is an L-aspartate binding site. The aspartate stretch occupies residues 192 to 195; that stretch reads QLFK. Arginine 214 contacts L-aspartate. Residues 214 to 216 and glutamine 223 each bind ATP; that span reads RDE. Histidine 449 is an L-aspartate binding site. Glutamate 483 is an ATP binding site. L-aspartate is bound at residue arginine 490. 535-538 is a binding site for ATP; the sequence is GWDR. The tract at residues 578–607 is disordered; it reads LEAGVDARPKPEARAQAGTAGPAAPVADPT. Over residues 580-590 the composition is skewed to basic and acidic residues; sequence AGVDARPKPEA. Residues 591–607 show a composition bias toward low complexity; that stretch reads RAQAGTAGPAAPVADPT.

Belongs to the class-II aminoacyl-tRNA synthetase family. Type 1 subfamily. In terms of assembly, homodimer.

It localises to the cytoplasm. The enzyme catalyses tRNA(Asx) + L-aspartate + ATP = L-aspartyl-tRNA(Asx) + AMP + diphosphate. Its function is as follows. Aspartyl-tRNA synthetase with relaxed tRNA specificity since it is able to aspartylate not only its cognate tRNA(Asp) but also tRNA(Asn). Reaction proceeds in two steps: L-aspartate is first activated by ATP to form Asp-AMP and then transferred to the acceptor end of tRNA(Asp/Asn). The chain is Aspartate--tRNA(Asp/Asn) ligase from Salinispora tropica (strain ATCC BAA-916 / DSM 44818 / JCM 13857 / NBRC 105044 / CNB-440).